We begin with the raw amino-acid sequence, 117 residues long: Large ribosomal subunit protein bL19 (117 aa).

It belongs to the bacterial ribosomal protein bL19 family.

This protein is located at the 30S-50S ribosomal subunit interface and may play a role in the structure and function of the aminoacyl-tRNA binding site. This chain is Large ribosomal subunit protein bL19, found in Proteus mirabilis (strain HI4320).